Here is an 859-residue protein sequence, read N- to C-terminus: Mismatch repair endonuclease PMS2 (859 aa).

Positions 45, 70, 109, 110, and 111 each coordinate ATP. Disordered stretches follow at residues E391–K413, L427–L455, and R469–D555. Basic and acidic residues-rich tracts occupy residues L427–E439 and C485–S495. Polar residues predominate over residues E512 to S525. A Nuclear localization signal motif is present at residues K574–K577. The disordered stretch occupies residues T578 to T597. A compositionally biased stretch (polar residues) spans S583–T597.

It belongs to the DNA mismatch repair MutL/HexB family. Heterodimer of PMS2 and MLH1 (MutL alpha); this interaction is required for the stability of both partners. Forms a ternary complex with MutS alpha (MSH2-MSH6) or MutS beta (MSH2-MSH3). Part of the BRCA1-associated genome surveillance complex (BASC), which contains BRCA1, MSH2, MSH6, MLH1, ATM, BLM, PMS2 and the RAD50-MRE11-NBS1 protein complex. This association could be a dynamic process changing throughout the cell cycle and within subnuclear domains. Interacts with MTMR15/FAN1.

Its subcellular location is the nucleus. It catalyses the reaction ATP + H2O = ADP + phosphate + H(+). Its function is as follows. Component of the post-replicative DNA mismatch repair system (MMR). Heterodimerizes with MLH1 to form MutL alpha. DNA repair is initiated by MutS alpha (MSH2-MSH6) or MutS beta (MSH2-MSH3) binding to a dsDNA mismatch, then MutL alpha is recruited to the heteroduplex. Assembly of the MutL-MutS-heteroduplex ternary complex in presence of RFC and PCNA is sufficient to activate endonuclease activity of PMS2. It introduces single-strand breaks near the mismatch and thus generates new entry points for the exonuclease EXO1 to degrade the strand containing the mismatch. DNA methylation would prevent cleavage and therefore assure that only the newly mutated DNA strand is going to be corrected. MutL alpha (MLH1-PMS2) interacts physically with the clamp loader subunits of DNA polymerase III, suggesting that it may play a role to recruit the DNA polymerase III to the site of the MMR. Also implicated in DNA damage signaling, a process which induces cell cycle arrest and can lead to apoptosis in case of major DNA damages. Possesses an ATPase activity, but in the absence of gross structural changes, ATP hydrolysis may not be necessary for proficient mismatch repair. In Mus musculus (Mouse), this protein is Mismatch repair endonuclease PMS2.